Consider the following 565-residue polypeptide: uncharacterized protein (565 aa).

The next 5 membrane-spanning stretches (helical) occupy residues 4-26 (FVQF…AVWV), 33-55 (GYGL…VGAA), 68-90 (SLLY…VNAL), 97-119 (YAIL…TQFF), and 162-184 (ISAM…IILL). RCK C-terminal domains are found at residues 210-295 (PNVD…LGPE) and 296-379 (VPDA…IFGV). The next 5 helical transmembrane spans lie at 389-411 (LLTL…PAFG), 415-432 (GLGN…VSSI), 453-472 (LGLI…DLLT), 482-504 (IFIV…GFHI), and 539-561 (WLGF…YFAM).

Belongs to the AAE transporter (TC 2.A.81) family.

It localises to the cell membrane. This is an uncharacterized protein from Bordetella parapertussis (strain 12822 / ATCC BAA-587 / NCTC 13253).